The primary structure comprises 573 residues: Protein FAM200A (573 aa).

Residues 1 to 51 form a disordered region; it reads MTPESRDTTDLSPGGTQEMEGIVIVKVEEEDEEDHFQKERNKVESSPQVLS. Residues 1–513 lie on the Extracellular side of the membrane; sequence MTPESRDTTD…DDFPLLSRKS (513 aa). Residues 514 to 533 form a helical membrane-spanning segment; that stretch reads ILLLLPFTTTYLCELGFSIL. The Cytoplasmic segment spans residues 534–573; the sequence is TRLKTKKRNRLNSAPDMRVALSSCVPDWKELMNRQAHPSH.

Belongs to the FAM200 family.

The protein resides in the membrane. The sequence is that of Protein FAM200A (FAM200A) from Homo sapiens (Human).